Here is a 321-residue protein sequence, read N- to C-terminus: PIH1 domain-containing protein 2 (321 aa).

It belongs to the PIH1 family.

The protein is PIH1 domain-containing protein 2 (pih1d2) of Xenopus tropicalis (Western clawed frog).